The sequence spans 109 residues: Peptide chaperone MftB (109 aa).

Belongs to the peptide chaperone MftB family. As to quaternary structure, interacts with MftA and MftC.

Peptide chaperone involved in the biosynthesis of the enzyme cofactor mycofactocin (MFT). Binds MftA and MftC with high affinity, and is essential for MftC activity on MftA, likely via the formation of a ternary complex. This chain is Peptide chaperone MftB, found in Mycobacterium ulcerans (strain Agy99).